Consider the following 196-residue polypeptide: Putative acetyltransferase YJL218W (196 aa).

An acetyl-CoA-binding site is contributed by N84. Catalysis depends on H114, which acts as the Proton donor/acceptor. Acetyl-CoA-binding positions include G141, A159, 164–165 (IR), K179, and R182.

Belongs to the transferase hexapeptide repeat family. In terms of assembly, homodimer.

This is Putative acetyltransferase YJL218W from Saccharomyces cerevisiae (strain ATCC 204508 / S288c) (Baker's yeast).